Reading from the N-terminus, the 752-residue chain is Cation-transporting P-type ATPase B (752 aa).

The HMA domain maps to 15–78 (RRIRLDVLGM…VVEKAGYHAA (64 aa)). Cys-26 and Cys-29 together coordinate a metal cation. The next 6 membrane-spanning stretches (helical) occupy residues 105–125 (LLVAAVLFVPLADLSTLFAIV), 132–152 (GWGYILTALAAPVVTWAAWPF), 167–187 (METLISVGIVAATAWSLSSVF), 201–221 (AILNSDSIYLEVAAGVTVFVL), 361–381 (IAGVFVPVVFVIAGLAGAAWL), and 390–410 (AFSVTLGVLVIACPCALGLAT). Catalysis depends on Asp-446, which acts as the 4-aspartylphosphate intermediate. Helical transmembrane passes span 491 to 511 (MAAAIVAASPDPGPVNGFVAV) and 714 to 734 (AIPIAAAGLLNPLIAGAAMAF).

The protein belongs to the cation transport ATPase (P-type) (TC 3.A.3) family. Type IB subfamily.

The protein localises to the cell membrane. It carries out the reaction ATP + H2O = ADP + phosphate + H(+). In Mycobacterium tuberculosis (strain ATCC 25618 / H37Rv), this protein is Cation-transporting P-type ATPase B (ctpB).